The primary structure comprises 197 residues: ATP-dependent Clp protease proteolytic subunit (197 aa).

Catalysis depends on serine 98, which acts as the Nucleophile. Residue histidine 123 is part of the active site.

Belongs to the peptidase S14 family. In terms of assembly, fourteen ClpP subunits assemble into 2 heptameric rings which stack back to back to give a disk-like structure with a central cavity, resembling the structure of eukaryotic proteasomes.

It localises to the cytoplasm. It carries out the reaction Hydrolysis of proteins to small peptides in the presence of ATP and magnesium. alpha-casein is the usual test substrate. In the absence of ATP, only oligopeptides shorter than five residues are hydrolyzed (such as succinyl-Leu-Tyr-|-NHMec, and Leu-Tyr-Leu-|-Tyr-Trp, in which cleavage of the -Tyr-|-Leu- and -Tyr-|-Trp bonds also occurs).. Cleaves peptides in various proteins in a process that requires ATP hydrolysis. Has a chymotrypsin-like activity. Plays a major role in the degradation of misfolded proteins. The protein is ATP-dependent Clp protease proteolytic subunit of Lysinibacillus sphaericus (strain C3-41).